Here is a 375-residue protein sequence, read N- to C-terminus: Vasculin (375 aa).

Disordered stretches follow at residues 49–109 and 356–375; these read SSDA…TSEI and DSVQ…SDDE. Residues 96–108 show a composition bias toward polar residues; the sequence is MKSQLHSENNTSE. Low complexity predominate over residues 365–375; the sequence is TSSSSDTSDDE.

Belongs to the vasculin family.

It localises to the nucleus. Its function is as follows. Functions as a GC-rich promoter-specific transactivating transcription factor. This is Vasculin (gpbp1) from Xenopus tropicalis (Western clawed frog).